The following is a 62-amino-acid chain: UPF0434 protein SPO3421 (62 aa).

Belongs to the UPF0434 family.

This Ruegeria pomeroyi (strain ATCC 700808 / DSM 15171 / DSS-3) (Silicibacter pomeroyi) protein is UPF0434 protein SPO3421.